The chain runs to 180 residues: Crossover junction endodeoxyribonuclease RuvC (180 aa).

Active-site residues include aspartate 7, glutamate 66, and aspartate 138. Residues aspartate 7, glutamate 66, and aspartate 138 each contribute to the Mg(2+) site.

The protein belongs to the RuvC family. In terms of assembly, homodimer which binds Holliday junction (HJ) DNA. The HJ becomes 2-fold symmetrical on binding to RuvC with unstacked arms; it has a different conformation from HJ DNA in complex with RuvA. In the full resolvosome a probable DNA-RuvA(4)-RuvB(12)-RuvC(2) complex forms which resolves the HJ. Mg(2+) serves as cofactor.

The protein localises to the cytoplasm. The catalysed reaction is Endonucleolytic cleavage at a junction such as a reciprocal single-stranded crossover between two homologous DNA duplexes (Holliday junction).. The RuvA-RuvB-RuvC complex processes Holliday junction (HJ) DNA during genetic recombination and DNA repair. Endonuclease that resolves HJ intermediates. Cleaves cruciform DNA by making single-stranded nicks across the HJ at symmetrical positions within the homologous arms, yielding a 5'-phosphate and a 3'-hydroxyl group; requires a central core of homology in the junction. The consensus cleavage sequence is 5'-(A/T)TT(C/G)-3'. Cleavage occurs on the 3'-side of the TT dinucleotide at the point of strand exchange. HJ branch migration catalyzed by RuvA-RuvB allows RuvC to scan DNA until it finds its consensus sequence, where it cleaves and resolves the cruciform DNA. This is Crossover junction endodeoxyribonuclease RuvC from Janthinobacterium sp. (strain Marseille) (Minibacterium massiliensis).